The sequence spans 530 residues: Na(+)/H(+) antiporter NhaB (530 aa).

Transmembrane regions (helical) follow at residues 13 to 33 (FLGK…VINP), 34 to 54 (LVFF…EFIF), 90 to 110 (LVAN…IYFM), 121 to 141 (ILIG…TAAF), 145 to 165 (FLDA…FYAI), 205 to 225 (LLIH…VGEP), 241 to 261 (FIIR…LTCI), 306 to 326 (GLIA…VGLI), 327 to 347 (GLSV…HSMG), 351 to 371 (EEAL…AVII), 455 to 475 (GQAA…QLSY), and 481 to 501 (MALP…IFFL).

It belongs to the NhaB Na(+)/H(+) (TC 2.A.34) antiporter family.

It localises to the cell inner membrane. It carries out the reaction 2 Na(+)(in) + 3 H(+)(out) = 2 Na(+)(out) + 3 H(+)(in). Its function is as follows. Na(+)/H(+) antiporter that extrudes sodium in exchange for external protons. The chain is Na(+)/H(+) antiporter NhaB from Aliivibrio fischeri (strain MJ11) (Vibrio fischeri).